Here is a 469-residue protein sequence, read N- to C-terminus: A-type ATP synthase subunit B 3 (469 aa).

Belongs to the ATPase alpha/beta chains family. As to quaternary structure, has multiple subunits with at least A(3), B(3), C, D, E, F, H, I and proteolipid K(x).

Its subcellular location is the cell membrane. Component of the A-type ATP synthase that produces ATP from ADP in the presence of a proton gradient across the membrane. The B chain is a regulatory subunit. This is A-type ATP synthase subunit B 3 from Methanospirillum hungatei JF-1 (strain ATCC 27890 / DSM 864 / NBRC 100397 / JF-1).